Consider the following 490-residue polypeptide: Tryptophan 5-hydroxylase 2 (490 aa).

The residue at position 19 (Ser19) is a Phosphoserine. A compositionally biased stretch (polar residues) spans Leu31–Gly42. Residues Leu31–Ala58 form a disordered region. Over residues Lys43 to Ala58 the composition is skewed to basic and acidic residues. The ACT domain maps to Ala65–Asn140. The Fe cation site is built by His318, His323, and Glu363.

Belongs to the biopterin-dependent aromatic amino acid hydroxylase family. As to quaternary structure, interacts with DNAJC12. The cofactor is Fe(2+). Brain specific.

The enzyme catalyses (6R)-L-erythro-5,6,7,8-tetrahydrobiopterin + L-tryptophan + O2 = 5-hydroxy-L-tryptophan + (4aS,6R)-4a-hydroxy-L-erythro-5,6,7,8-tetrahydrobiopterin. Its pathway is aromatic compound metabolism; serotonin biosynthesis; serotonin from L-tryptophan: step 1/2. The chain is Tryptophan 5-hydroxylase 2 (TPH2) from Homo sapiens (Human).